A 359-amino-acid chain; its full sequence is Nicotinate-nucleotide--dimethylbenzimidazole phosphoribosyltransferase (359 aa).

The active-site Proton acceptor is E318.

Belongs to the CobT family. Homodimer.

The enzyme catalyses 5,6-dimethylbenzimidazole + nicotinate beta-D-ribonucleotide = alpha-ribazole 5'-phosphate + nicotinate + H(+). The protein operates within nucleoside biosynthesis; alpha-ribazole biosynthesis; alpha-ribazole from 5,6-dimethylbenzimidazole: step 1/2. In terms of biological role, catalyzes the synthesis of alpha-ribazole-5'-phosphate from nicotinate mononucleotide (NAMN) and 5,6-dimethylbenzimidazole (DMB). The protein is Nicotinate-nucleotide--dimethylbenzimidazole phosphoribosyltransferase of Escherichia coli (strain UTI89 / UPEC).